Consider the following 120-residue polypeptide: Chaperonin GroEL (120 aa).

23-27 (DGTTT) is a binding site for ATP.

This sequence belongs to the chaperonin (HSP60) family. Forms a cylinder of 14 subunits composed of two heptameric rings stacked back-to-back. Interacts with the co-chaperonin GroES.

The protein resides in the cytoplasm. The enzyme catalyses ATP + H2O + a folded polypeptide = ADP + phosphate + an unfolded polypeptide.. Its function is as follows. Together with its co-chaperonin GroES, plays an essential role in assisting protein folding. The GroEL-GroES system forms a nano-cage that allows encapsulation of the non-native substrate proteins and provides a physical environment optimized to promote and accelerate protein folding. The protein is Chaperonin GroEL of Mycobacterium malmoense.